The following is a 333-amino-acid chain: DNA-directed RNA polymerase subunit alpha (333 aa).

Positions M1–K234 are alpha N-terminal domain (alpha-NTD). The segment at I248–A333 is alpha C-terminal domain (alpha-CTD).

The protein belongs to the RNA polymerase alpha chain family. As to quaternary structure, homodimer. The RNAP catalytic core consists of 2 alpha, 1 beta, 1 beta' and 1 omega subunit. When a sigma factor is associated with the core the holoenzyme is formed, which can initiate transcription.

The enzyme catalyses RNA(n) + a ribonucleoside 5'-triphosphate = RNA(n+1) + diphosphate. Its function is as follows. DNA-dependent RNA polymerase catalyzes the transcription of DNA into RNA using the four ribonucleoside triphosphates as substrates. This Ectopseudomonas mendocina (strain ymp) (Pseudomonas mendocina) protein is DNA-directed RNA polymerase subunit alpha.